Consider the following 349-residue polypeptide: PDZ and LIM domain protein 2 (349 aa).

One can recognise a PDZ domain in the interval 1 to 84; that stretch reads MALTVDVAGP…PLRLQLDRSQ (84 aa). Residues 74-147 are disordered; sequence SPLRLQLDRS…TPPPTSPVAL (74 aa). Residues 81-94 are compositionally biased toward polar residues; the sequence is DRSQTASPGQTNGE. A phosphoserine mark is found at Ser124, Ser127, Ser129, Ser134, and Ser137. 2 positions are modified to phosphothreonine: Thr138 and Thr142. Residues Ser143 and Ser163 each carry the phosphoserine modification. The segment at 169–212 is disordered; sequence AHHLTYPGHPTSQQAGHSSPSDSAVRVLLHSPGRPSSPRFSSLD. Residues 178-190 are compositionally biased toward polar residues; that stretch reads PTSQQAGHSSPSD. 6 positions are modified to phosphoserine: Ser199, Ser204, Ser205, Ser209, Ser210, and Ser263. Residues 199–210 show a composition bias toward low complexity; that stretch reads SPGRPSSPRFSS. Residues 281–341 form the LIM zinc-binding domain; sequence HTCEKCSVNI…EKHARQRYSM (61 aa).

Interacts with alpha-actinins ACTN1 and ACTN4, FLNA and MYH9. Interacts (via LIM zinc-binding domain) with MKRN2. Highly expressed in lung. Expressed at intermediate level in kidney, testis and spleen. Weakly expressed in heart and brain.

It is found in the cytoplasm. The protein resides in the cytoskeleton. Its function is as follows. Probable adapter protein located at the actin cytoskeleton that promotes cell attachment. Necessary for the migratory capacity of epithelial cells. Overexpression enhances cell adhesion to collagen and fibronectin and suppresses anchorage independent growth. May contribute to tumor cell migratory capacity. The polypeptide is PDZ and LIM domain protein 2 (Pdlim2) (Mus musculus (Mouse)).